The primary structure comprises 383 residues: Succinyl-diaminopimelate desuccinylase (383 aa).

His-73 provides a ligand contact to Zn(2+). Asp-75 is an active-site residue. A Zn(2+)-binding site is contributed by Asp-107. Residue Glu-141 is the Proton acceptor of the active site. Zn(2+) contacts are provided by Glu-142, Glu-170, and His-356.

Belongs to the peptidase M20A family. DapE subfamily. Homodimer. Zn(2+) serves as cofactor. Requires Co(2+) as cofactor.

It carries out the reaction N-succinyl-(2S,6S)-2,6-diaminopimelate + H2O = (2S,6S)-2,6-diaminopimelate + succinate. The protein operates within amino-acid biosynthesis; L-lysine biosynthesis via DAP pathway; LL-2,6-diaminopimelate from (S)-tetrahydrodipicolinate (succinylase route): step 3/3. Catalyzes the hydrolysis of N-succinyl-L,L-diaminopimelic acid (SDAP), forming succinate and LL-2,6-diaminopimelate (DAP), an intermediate involved in the bacterial biosynthesis of lysine and meso-diaminopimelic acid, an essential component of bacterial cell walls. In Pseudomonas putida (strain ATCC 700007 / DSM 6899 / JCM 31910 / BCRC 17059 / LMG 24140 / F1), this protein is Succinyl-diaminopimelate desuccinylase.